A 135-amino-acid chain; its full sequence is Small ribosomal subunit protein bS16m (135 aa).

The N-terminal 34 residues, 1–34, are a transit peptide targeting the mitochondrion; sequence MVQLTTIFCKAYHGGHLTIRLALGGCTNRPFYRI.

Belongs to the bacterial ribosomal protein bS16 family. Component of the mitochondrial ribosome small subunit (28S) which comprises a 12S rRNA and about 30 distinct proteins.

The protein resides in the mitochondrion. In Mus musculus (Mouse), this protein is Small ribosomal subunit protein bS16m (Mrps16).